We begin with the raw amino-acid sequence, 63 residues long: KEGYPVDWGNCKYECMSDEYCKDLCADRKATSGYCYKLNWSCYCKGLPDDSPIKTPGKCRSGR.

The region spanning 1-60 (KEGYPVDWGNCKYECMSDEYCKDLCADRKATSGYCYKLNWSCYCKGLPDDSPIKTPGKCR) is the LCN-type CS-alpha/beta domain. 4 disulfides stabilise this stretch: Cys-11-Cys-59, Cys-15-Cys-35, Cys-21-Cys-42, and Cys-25-Cys-44.

It belongs to the long (4 C-C) scorpion toxin superfamily. Sodium channel inhibitor family. Alpha subfamily. As to expression, expressed by the venom gland.

Its subcellular location is the secreted. Functionally, alpha toxins bind voltage-independently at site-3 of sodium channels (Nav) and inhibits the inactivation of the activated channels, thereby blocking neuronal transmission. The chain is Putative alpha-neurotoxin RjAa9 from Rhopalurus junceus (Caribbean blue scorpion).